The following is a 182-amino-acid chain: Ribosome-recycling factor (182 aa).

The protein belongs to the RRF family.

It is found in the cytoplasm. Functionally, responsible for the release of ribosomes from messenger RNA at the termination of protein biosynthesis. May increase the efficiency of translation by recycling ribosomes from one round of translation to another. In Prochlorococcus marinus (strain SARG / CCMP1375 / SS120), this protein is Ribosome-recycling factor.